The following is an 834-amino-acid chain: Inner nuclear membrane protein SRC1 (834 aa).

A disordered region spans residues 68 to 292 (DEGIVKMDRP…TANGTGHSTP (225 aa)). A compositionally biased stretch (low complexity) spans 77–86 (PSSSPSIASP). S78, S80, and S85 each carry phosphoserine. 2 stretches are compositionally biased toward acidic residues: residues 114–127 (VSNDDDDDDDDDDD) and 142–153 (DTDEVDDEEDDV). The span at 154–170 (ITSSSNKSDTNDFQQNS) shows a compositional bias: polar residues. The residue at position 181 (S181) is a Phosphoserine. The segment covering 188–198 (NSKENKIDNKH) has biased composition (basic and acidic residues). Phosphoserine occurs at positions 203, 204, and 206. Over residues 243 to 266 (IKNTNRKPVSMDNFNDSLTSSGTE) the composition is skewed to polar residues. S301 is modified (phosphoserine). Residues 307–364 (PQKEVPSTILVPEVEQQEPSQSERTPSLFSSEGSGSESEAPLLPEITTPGPHQPMGNT) form a disordered region. Low complexity-rich tracts occupy residues 317–329 (VPEVEQQEPSQSE) and 336–345 (SSEGSGSESE). Phosphothreonine is present on T394. S427 carries the phosphoserine modification. Transmembrane regions (helical) follow at residues 455–475 (LLALFLFCIFIVIPLLFGLWY) and 708–728 (IWLMFLLIVISKVIEIKLKNY).

It is found in the nucleus inner membrane. In terms of biological role, plays a role in sister chromatid separation. The sequence is that of Inner nuclear membrane protein SRC1 (SRC1) from Saccharomyces cerevisiae (strain ATCC 204508 / S288c) (Baker's yeast).